The chain runs to 198 residues: Twist-related protein 1 (198 aa).

The segment covering 1 to 18 (MMQDVSSSPVSPADDSLS) has biased composition (low complexity). Residues 1 to 101 (MMQDVSSSPV…GGGSPQSYEE (101 aa)) form a disordered region. Basic residues predominate over residues 34–43 (RGGRKRRSSR). Composition is skewed to gly residues over residues 46 to 64 (AGGG…GGDE) and 79 to 95 (GCGG…GGGS). In terms of domain architecture, bHLH spans 104–155 (TQRVMANVRERQRTQSLNEAFAALRKIIPTLPSDKLSKIQTLKLAARYIDFL). Residues 157 to 187 (QVLQSDELDSKMASCSYVAHERLSYAFSVWR) are sufficient for transactivation activity.

Efficient DNA binding requires dimerization with another bHLH protein. Homodimer or heterodimer with E proteins such as TCF3. ID1 binds preferentially to TCF3 but does not interact efficiently with TWIST1 so ID1 levels control the amount of TCF3 available to dimerize with TWIST and thus determine the type of dimer formed.

The protein localises to the nucleus. Its function is as follows. Acts as a transcriptional regulator. Inhibits myogenesis by sequestrating E proteins, inhibiting trans-activation by MEF2, and inhibiting DNA-binding by MYOD1 through physical interaction. This interaction probably involves the basic domains of both proteins. Also represses expression of pro-inflammatory cytokines such as TNFA and IL1B. Regulates cranial suture patterning and fusion. Activates transcription as a heterodimer with E proteins. Regulates gene expression differentially, depending on dimer composition. Homodimers induce expression of FGFR2 and POSTN while heterodimers repress FGFR2 and POSTN expression and induce THBS1 expression. Heterodimerization is also required for osteoblast differentiation. Represses the activity of the circadian transcriptional activator: NPAS2-BMAL1 heterodimer. The polypeptide is Twist-related protein 1 (TWIST1) (Eulemur fulvus fulvus (Brown lemur)).